Reading from the N-terminus, the 250-residue chain is Leucyl/phenylalanyl-tRNA--protein transferase (250 aa).

It belongs to the L/F-transferase family.

It localises to the cytoplasm. The catalysed reaction is N-terminal L-lysyl-[protein] + L-leucyl-tRNA(Leu) = N-terminal L-leucyl-L-lysyl-[protein] + tRNA(Leu) + H(+). It carries out the reaction N-terminal L-arginyl-[protein] + L-leucyl-tRNA(Leu) = N-terminal L-leucyl-L-arginyl-[protein] + tRNA(Leu) + H(+). The enzyme catalyses L-phenylalanyl-tRNA(Phe) + an N-terminal L-alpha-aminoacyl-[protein] = an N-terminal L-phenylalanyl-L-alpha-aminoacyl-[protein] + tRNA(Phe). In terms of biological role, functions in the N-end rule pathway of protein degradation where it conjugates Leu, Phe and, less efficiently, Met from aminoacyl-tRNAs to the N-termini of proteins containing an N-terminal arginine or lysine. This Xanthomonas oryzae pv. oryzae (strain MAFF 311018) protein is Leucyl/phenylalanyl-tRNA--protein transferase.